We begin with the raw amino-acid sequence, 380 residues long: DNA replication and repair protein RecF (380 aa).

ATP is bound at residue 30–37; the sequence is GENAQGKT.

It belongs to the RecF family.

It is found in the cytoplasm. Its function is as follows. The RecF protein is involved in DNA metabolism; it is required for DNA replication and normal SOS inducibility. RecF binds preferentially to single-stranded, linear DNA. It also seems to bind ATP. This is DNA replication and repair protein RecF from Synechococcus sp. (strain JA-2-3B'a(2-13)) (Cyanobacteria bacterium Yellowstone B-Prime).